Consider the following 408-residue polypeptide: Secreted mono- and diacylglycerol lipase 2 (408 aa).

An N-terminal signal peptide occupies residues 1-24 (MRFKLADSLSLITVQLILATSTLA). N-linked (GlcNAc...) asparagine glycosylation occurs at Asn-177. Residue Ser-217 is the Nucleophile of the active site. Residues Asp-283 and His-374 contribute to the active site.

This sequence belongs to the AB hydrolase superfamily. Lipase family. Class 3 subfamily.

It is found in the secreted. It catalyses the reaction a monoacylglycerol + H2O = glycerol + a fatty acid + H(+). It carries out the reaction a diacylglycerol + H2O = a monoacylglycerol + a fatty acid + H(+). Secreted mono- and diacylglycerol lipase involved in plant virulence. Has a substrate preference for p-nitrophenyl esters with a carbon chain length of C10 (p-nitrophenyl caprate). In Gibberella zeae (strain ATCC MYA-4620 / CBS 123657 / FGSC 9075 / NRRL 31084 / PH-1) (Wheat head blight fungus), this protein is Secreted mono- and diacylglycerol lipase 2.